Consider the following 362-residue polypeptide: Caspase activity and apoptosis inhibitor 1 (362 aa).

Over residues 1–14 (MTGKKSSREKRRKR) the composition is skewed to basic residues. 2 disordered regions span residues 1–44 (MTGK…SGCG) and 65–101 (TGGGSGGSCWGGSSVERGERRKRRSTDSSSSVSGSLQ). Residues 19–32 (AAAALAAPDLVPAV) show a composition bias toward low complexity. Composition is skewed to gly residues over residues 33–44 (GGSGSGSTSGCG) and 65–74 (TGGGSGGSCW). Phosphoserine is present on Ser-89. Thr-90 is modified (phosphothreonine). Lys-105 participates in a covalent cross-link: Glycyl lysine isopeptide (Lys-Gly) (interchain with G-Cter in SUMO2). 2 positions are modified to phosphoserine: Ser-121 and Ser-204. Disordered stretches follow at residues 226–251 (SCVDSTSSLRENKQPEGLELKQGKGE), 269–291 (GPCNEEAAAPEVPENTVQSEAGQ), and 309–332 (LAESSPKEPKAATLTVPPPEDVQP). The segment covering 235–251 (RENKQPEGLELKQGKGE) has biased composition (basic and acidic residues). A compositionally biased stretch (low complexity) spans 273–282 (EEAAAPEVPE). The stretch at 282–312 (ENTVQSEAGQIDDLEKDIEKSVNEILGLAES) forms a coiled coil. Ser-313 carries the phosphoserine modification.

Functionally, anti-apoptotic protein that modulates a caspase-10 dependent mitochondrial caspase-3/9 feedback amplification loop. This is Caspase activity and apoptosis inhibitor 1 (CAAP1) from Bos taurus (Bovine).